We begin with the raw amino-acid sequence, 78 residues long: Exodeoxyribonuclease 7 small subunit (78 aa).

Belongs to the XseB family. As to quaternary structure, heterooligomer composed of large and small subunits.

The protein resides in the cytoplasm. It catalyses the reaction Exonucleolytic cleavage in either 5'- to 3'- or 3'- to 5'-direction to yield nucleoside 5'-phosphates.. Its function is as follows. Bidirectionally degrades single-stranded DNA into large acid-insoluble oligonucleotides, which are then degraded further into small acid-soluble oligonucleotides. This chain is Exodeoxyribonuclease 7 small subunit, found in Mycobacterium leprae (strain TN).